The following is a 236-amino-acid chain: Phosphoribosylaminoimidazole-succinocarboxamide synthase (236 aa).

Belongs to the SAICAR synthetase family.

It carries out the reaction 5-amino-1-(5-phospho-D-ribosyl)imidazole-4-carboxylate + L-aspartate + ATP = (2S)-2-[5-amino-1-(5-phospho-beta-D-ribosyl)imidazole-4-carboxamido]succinate + ADP + phosphate + 2 H(+). The protein operates within purine metabolism; IMP biosynthesis via de novo pathway; 5-amino-1-(5-phospho-D-ribosyl)imidazole-4-carboxamide from 5-amino-1-(5-phospho-D-ribosyl)imidazole-4-carboxylate: step 1/2. This Chlorobium limicola (strain DSM 245 / NBRC 103803 / 6330) protein is Phosphoribosylaminoimidazole-succinocarboxamide synthase.